A 152-amino-acid polypeptide reads, in one-letter code: Transcriptional regulator MraZ (152 aa).

SpoVT-AbrB domains follow at residues A5 to E52 and A81 to A124.

It belongs to the MraZ family. As to quaternary structure, forms oligomers.

It localises to the cytoplasm. It is found in the nucleoid. In Idiomarina loihiensis (strain ATCC BAA-735 / DSM 15497 / L2-TR), this protein is Transcriptional regulator MraZ.